A 227-amino-acid polypeptide reads, in one-letter code: Agamous-like MADS-box protein AGL17 (227 aa).

One can recognise an MADS-box domain in the interval Arg-3–Phe-57. Residues Val-86–Glu-176 enclose the K-box domain.

As to expression, preferentially expressed in roots.

It is found in the nucleus. In terms of biological role, probable transcription factor. The sequence is that of Agamous-like MADS-box protein AGL17 (AGL17) from Arabidopsis thaliana (Mouse-ear cress).